A 206-amino-acid polypeptide reads, in one-letter code: Thymidylate kinase (206 aa).

An ATP-binding site is contributed by 14 to 21 (GGEGIGKS).

This sequence belongs to the thymidylate kinase family.

It catalyses the reaction dTMP + ATP = dTDP + ADP. In terms of biological role, phosphorylation of dTMP to form dTDP in both de novo and salvage pathways of dTTP synthesis. The chain is Thymidylate kinase from Rickettsia bellii (strain OSU 85-389).